Here is a 411-residue protein sequence, read N- to C-terminus: Formate-dependent phosphoribosylglycinamide formyltransferase (411 aa).

25 to 26 (EL) is a binding site for N(1)-(5-phospho-beta-D-ribosyl)glycinamide. Residues R118, K159, 164–169 (SSGAGQ), 199–202 (EQYI), and E207 contribute to the ATP site. Residues 123-318 (TFAHDKLGLP…EFDLHARAIL (196 aa)) enclose the ATP-grasp domain. Residues E277 and E289 each contribute to the Mg(2+) site. Residues D296, K366, and 373 to 374 (RR) each bind N(1)-(5-phospho-beta-D-ribosyl)glycinamide.

This sequence belongs to the PurK/PurT family. As to quaternary structure, homodimer.

It catalyses the reaction N(1)-(5-phospho-beta-D-ribosyl)glycinamide + formate + ATP = N(2)-formyl-N(1)-(5-phospho-beta-D-ribosyl)glycinamide + ADP + phosphate + H(+). The protein operates within purine metabolism; IMP biosynthesis via de novo pathway; N(2)-formyl-N(1)-(5-phospho-D-ribosyl)glycinamide from N(1)-(5-phospho-D-ribosyl)glycinamide (formate route): step 1/1. Its function is as follows. Involved in the de novo purine biosynthesis. Catalyzes the transfer of formate to 5-phospho-ribosyl-glycinamide (GAR), producing 5-phospho-ribosyl-N-formylglycinamide (FGAR). Formate is provided by PurU via hydrolysis of 10-formyl-tetrahydrofolate. The sequence is that of Formate-dependent phosphoribosylglycinamide formyltransferase from Corynebacterium jeikeium (strain K411).